A 483-amino-acid chain; its full sequence is Glycogen synthase kinase-3 alpha (483 aa).

The span at methionine 1–glycine 15 shows a compositional bias: gly residues. The interval methionine 1–aspartate 96 is disordered. Position 2 is an N-acetylserine (serine 2). Serine 2 is modified (phosphoserine). Serine 21 bears the Phosphoserine; by PKB/AKT1 mark. Residues proline 25–alanine 82 show a composition bias toward gly residues. Phosphoserine occurs at positions 72, 77, and 97. Residues tyrosine 119 to phenylalanine 403 form the Protein kinase domain. ATP-binding positions include isoleucine 125 to valine 133 and lysine 148. Aspartate 244 serves as the catalytic Proton acceptor. The residue at position 279 (tyrosine 279) is a Phosphotyrosine. The segment at proline 443–serine 483 is disordered. A compositionally biased stretch (polar residues) spans glycine 450–aspartate 469.

It belongs to the protein kinase superfamily. CMGC Ser/Thr protein kinase family. GSK-3 subfamily. Monomer. Interacts with ARRB2, AXIN1 and CTNNB1/beta-catenin. Interacts with CTNND2. Interacts with LMBR1L. Interacts with DDX3X. Interacts with TNFRSF10B. Phosphorylated by AKT1 at Ser-21: upon insulin-mediated signaling, the activated PKB/AKT1 protein kinase phosphorylates and deactivates GSK3A, resulting in the dephosphorylation and activation of GYS1. Activated by phosphorylation at Tyr-279.

The enzyme catalyses L-seryl-[tau protein] + ATP = O-phospho-L-seryl-[tau protein] + ADP + H(+). It carries out the reaction L-threonyl-[tau protein] + ATP = O-phospho-L-threonyl-[tau protein] + ADP + H(+). It catalyses the reaction L-seryl-[protein] + ATP = O-phospho-L-seryl-[protein] + ADP + H(+). The catalysed reaction is L-threonyl-[protein] + ATP = O-phospho-L-threonyl-[protein] + ADP + H(+). Its activity is regulated as follows. Activated by phosphorylation at Tyr-279. In response to insulin, inhibited by phosphorylation at Ser-21 by PKB/AKT1; phosphorylation at this site causes a conformational change, preventing access of substrates to the active site. Inhibited by lithium. In terms of biological role, constitutively active protein kinase that acts as a negative regulator in the hormonal control of glucose homeostasis, Wnt signaling and regulation of transcription factors and microtubules, by phosphorylating and inactivating glycogen synthase (GYS1 or GYS2), CTNNB1/beta-catenin, APC and AXIN1. Requires primed phosphorylation of the majority of its substrates. Contributes to insulin regulation of glycogen synthesis by phosphorylating and inhibiting GYS1 activity and hence glycogen synthesis. Regulates glycogen metabolism in liver, but not in muscle. May also mediate the development of insulin resistance by regulating activation of transcription factors. In Wnt signaling, regulates the level and transcriptional activity of nuclear CTNNB1/beta-catenin. Facilitates amyloid precursor protein (APP) processing and the generation of APP-derived amyloid plaques found in Alzheimer disease. May be involved in the regulation of replication in pancreatic beta-cells. Is necessary for the establishment of neuronal polarity and axon outgrowth. Through phosphorylation of the anti-apoptotic protein MCL1, may control cell apoptosis in response to growth factors deprivation. Acts as a regulator of autophagy by mediating phosphorylation of KAT5/TIP60 under starvation conditions, activating KAT5/TIP60 acetyltransferase activity and promoting acetylation of key autophagy regulators, such as ULK1 and RUBCNL/Pacer. Negatively regulates extrinsic apoptotic signaling pathway via death domain receptors. Promotes the formation of an anti-apoptotic complex, made of DDX3X, BRIC2 and GSK3B, at death receptors, including TNFRSF10B. The anti-apoptotic function is most effective with weak apoptotic signals and can be overcome by stronger stimulation. This is Glycogen synthase kinase-3 alpha (Gsk3a) from Rattus norvegicus (Rat).